The primary structure comprises 224 residues: 7-cyano-7-deazaguanine synthase (224 aa).

7-17 (LSGGLDSSTIL) serves as a coordination point for ATP. Residues C191, C199, C202, and C205 each coordinate Zn(2+).

Belongs to the QueC family. Requires Zn(2+) as cofactor.

It carries out the reaction 7-carboxy-7-deazaguanine + NH4(+) + ATP = 7-cyano-7-deazaguanine + ADP + phosphate + H2O + H(+). The protein operates within purine metabolism; 7-cyano-7-deazaguanine biosynthesis. Functionally, catalyzes the ATP-dependent conversion of 7-carboxy-7-deazaguanine (CDG) to 7-cyano-7-deazaguanine (preQ(0)). The protein is 7-cyano-7-deazaguanine synthase of Nostoc punctiforme (strain ATCC 29133 / PCC 73102).